We begin with the raw amino-acid sequence, 202 residues long: Small ribosomal subunit protein uS5 (202 aa).

Positions 1 to 13 are enriched in gly residues; the sequence is MPGQQRRGGGSGG. The interval 1–31 is disordered; sequence MPGQQRRGGGSGGSDRRERRDRSGGGPAQEK. Positions 14–23 are enriched in basic and acidic residues; it reads SDRRERRDRS. One can recognise an S5 DRBM domain in the interval 34 to 97; sequence YVERVVAINR…EEAKKHFFKV (64 aa).

This sequence belongs to the universal ribosomal protein uS5 family. Part of the 30S ribosomal subunit. Contacts proteins S4 and S8.

Its function is as follows. With S4 and S12 plays an important role in translational accuracy. In terms of biological role, located at the back of the 30S subunit body where it stabilizes the conformation of the head with respect to the body. The polypeptide is Small ribosomal subunit protein uS5 (Parafrankia sp. (strain EAN1pec)).